We begin with the raw amino-acid sequence, 317 residues long: Transcription cofactor vestigial-like protein 2 (317 aa).

4 disordered regions span residues 41-76, 108-128, 191-214, and 253-293; these read CNAS…ERPP, SQPS…SSGP, TEPW…GGAL, and RLAT…PSGD. Low complexity predominate over residues 44–57; that stretch reads SPSSSGSGSSSFSS. The span at 63–76 shows a compositional bias: basic and acidic residues; that stretch reads IKEEEGSPEKERPP. Residues 108–120 are compositionally biased toward low complexity; sequence SQPSSYSPSCTSS. Over residues 196 to 206 the composition is skewed to basic residues; sequence HAHPHHAHPHH. Residues 272–292 show a composition bias toward low complexity; sequence KGEPAGAAWAGPGGPFASPSG.

Belongs to the vestigial family. In terms of assembly, interacts with TEFs. Binds to TEAD1/TEF1. In terms of tissue distribution, skeletal muscle.

The protein resides in the nucleus. In terms of biological role, may act as a specific coactivator for the mammalian TEFs. May play a role in the development of skeletal muscles. This is Transcription cofactor vestigial-like protein 2 (VGLL2) from Homo sapiens (Human).